Consider the following 359-residue polypeptide: GTP 3',8-cyclase 1 (359 aa).

One can recognise a Radical SAM core domain in the interval 21-241 (RCRRMMGDLR…SLEKRYGRIE (221 aa)). Arg30 provides a ligand contact to GTP. [4Fe-4S] cluster contacts are provided by Cys37 and Cys41. Tyr43 contributes to the S-adenosyl-L-methionine binding site. Cys44 contacts [4Fe-4S] cluster. Residue Arg80 coordinates GTP. Residue Gly84 coordinates S-adenosyl-L-methionine. Thr115 serves as a coordination point for GTP. Residue Ser139 participates in S-adenosyl-L-methionine binding. Position 176 (Lys176) interacts with GTP. S-adenosyl-L-methionine is bound at residue Met210. Cys273 and Cys276 together coordinate [4Fe-4S] cluster. A GTP-binding site is contributed by 278–280 (RSR). [4Fe-4S] cluster is bound at residue Cys290.

This sequence belongs to the radical SAM superfamily. MoaA family. As to quaternary structure, monomer and homodimer. [4Fe-4S] cluster is required as a cofactor.

The enzyme catalyses GTP + AH2 + S-adenosyl-L-methionine = (8S)-3',8-cyclo-7,8-dihydroguanosine 5'-triphosphate + 5'-deoxyadenosine + L-methionine + A + H(+). The protein operates within cofactor biosynthesis; molybdopterin biosynthesis. Functionally, catalyzes the cyclization of GTP to (8S)-3',8-cyclo-7,8-dihydroguanosine 5'-triphosphate. This chain is GTP 3',8-cyclase 1, found in Mycobacterium tuberculosis (strain CDC 1551 / Oshkosh).